We begin with the raw amino-acid sequence, 90 residues long: Cell division protein CrgA (90 aa).

A disordered region spans residues 1-25 (MPKARVTKNETAPVSSNPSANRTPV). Residues 9–22 (NETAPVSSNPSANR) show a composition bias toward polar residues. The next 2 membrane-spanning stretches (helical) occupy residues 38–58 (VIMF…YLVG) and 67–87 (LGAW…LMTM).

Belongs to the CrgA family.

It localises to the cell membrane. Functionally, involved in cell division. The polypeptide is Cell division protein CrgA (Corynebacterium glutamicum (strain ATCC 13032 / DSM 20300 / JCM 1318 / BCRC 11384 / CCUG 27702 / LMG 3730 / NBRC 12168 / NCIMB 10025 / NRRL B-2784 / 534)).